The chain runs to 687 residues: Ribonuclease E (687 aa).

The region spanning 35-117 (GDIYLGVVEN…LTGNITLPGR (83 aa)) is the S1 motif domain. Asp296 and Asp339 together coordinate Mg(2+). Residues Cys397 and Cys400 each coordinate Zn(2+). A disordered region spans residues 650-687 (PIKLTETMEESEVNAASTANRRRRRRSSASDSDTGEDS). A C4 Arg-rich motif, necessary and sufficient to confer PNPase binding on another protein motif is present at residues 670–678 (RRRRRRSSA).

This sequence belongs to the RNase E/G family. In terms of assembly, may form homodimers or higher order multimers. Interacts with polynucleotide phosphorylase (PNPase, pnp) via the C4 Arg-rich motif (residues 670-678). A homotetramer formed by a dimer of dimers. Mg(2+) serves as cofactor. Zn(2+) is required as a cofactor.

The protein localises to the cytoplasm. The catalysed reaction is Endonucleolytic cleavage of single-stranded RNA in A- and U-rich regions.. In terms of biological role, endoribonuclease that plays a central role in rRNA and tRNA processing and mRNA decay. Has been shown to act on 9S rRNA (the precursor of 5S rRNA). This is Ribonuclease E from Nostoc sp. (strain PCC 7120 / SAG 25.82 / UTEX 2576).